The chain runs to 273 residues: Proteasome subunit beta (273 aa).

Residues 1–50 constitute a propeptide, removed in mature form; by autocatalysis; that stretch reads MRKDGARLALPLFDPRHDPGPDFAALVSRDAARTVPTSGDGSLGAQVPHG. Threonine 51 functions as the Nucleophile in the catalytic mechanism.

The protein belongs to the peptidase T1B family. The 20S proteasome core is composed of 14 alpha and 14 beta subunits that assemble into four stacked heptameric rings, resulting in a barrel-shaped structure. The two inner rings, each composed of seven catalytic beta subunits, are sandwiched by two outer rings, each composed of seven alpha subunits. The catalytic chamber with the active sites is on the inside of the barrel. Has a gated structure, the ends of the cylinder being occluded by the N-termini of the alpha-subunits. Is capped by the proteasome-associated ATPase, ARC.

It localises to the cytoplasm. The catalysed reaction is Cleavage of peptide bonds with very broad specificity.. It functions in the pathway protein degradation; proteasomal Pup-dependent pathway. With respect to regulation, the formation of the proteasomal ATPase ARC-20S proteasome complex, likely via the docking of the C-termini of ARC into the intersubunit pockets in the alpha-rings, may trigger opening of the gate for substrate entry. Interconversion between the open-gate and close-gate conformations leads to a dynamic regulation of the 20S proteasome proteolysis activity. Component of the proteasome core, a large protease complex with broad specificity involved in protein degradation. The sequence is that of Proteasome subunit beta from Acidimicrobium ferrooxidans (strain DSM 10331 / JCM 15462 / NBRC 103882 / ICP).